We begin with the raw amino-acid sequence, 192 residues long: MSFYRGTASHPWHDLHPGNDAPNFVSCVIEIPRGSKVKYELDKDTGLCFVDRILYSSVVYPHNYGFVPKTLCEDGDPLDVLVLMQEPVVPMCFLRAKPIGVMQMLDQGERDDKLIAVHADDPEYKGFTDISQLPPHRLAEIKRFFEDYKKNEHKEVVVDDFLGAEEAKKVVKDSLNMYQEHYVPRKLRNVYE.

Substrate-binding residues include Lys-38, Arg-52, and Tyr-64. Asp-74, Asp-79, and Asp-111 together coordinate Mg(2+). Residue Tyr-148 participates in substrate binding.

As to quaternary structure, monomer. Mg(2+) serves as cofactor. Post-translationally, the N-terminus is blocked.

The protein localises to the mitochondrion. The catalysed reaction is diphosphate + H2O = 2 phosphate + H(+). The chain is Soluble inorganic pyrophosphatase 2 (ppa2) from Chlamydomonas reinhardtii (Chlamydomonas smithii).